Consider the following 91-residue polypeptide: MSVKIRLKRMGSKKRPFYRIVVADSRSPRDGRFITSLGTYNPLTTPKQVKFDEDAVMEWLQKGAQPSDTVRNMLQKAGVMKKYHEAKYAKK.

Belongs to the bacterial ribosomal protein bS16 family.

The chain is Small ribosomal subunit protein bS16 from Limosilactobacillus fermentum (strain NBRC 3956 / LMG 18251) (Lactobacillus fermentum).